The chain runs to 130 residues: UPF0102 protein SCO5602 (130 aa).

This sequence belongs to the UPF0102 family.

This is UPF0102 protein SCO5602 from Streptomyces coelicolor (strain ATCC BAA-471 / A3(2) / M145).